Consider the following 73-residue polypeptide: Accessory secretory protein Asp5 (73 aa).

The signal sequence occupies residues 1-30; the sequence is MQKLLLILTILLALILITLVISLPRENQQF. A helical membrane pass occupies residues 52–72; it reads IILLIVSILLFLTLIFYMIQT.

As to quaternary structure, part of the accessory SecA2/SecY2 protein translocation apparatus required to export cell wall protein GspB.

It is found in the cell membrane. Its function is as follows. Part of the accessory SecA2/SecY2 system specifically required to export GspB, a serine-rich repeat cell wall protein encoded upstream in the same operon. The protein is Accessory secretory protein Asp5 (asp5) of Streptococcus gordonii.